The primary structure comprises 1060 residues: Carbamoyl phosphate synthase large chain (1060 aa).

Residues Met1 to Glu401 are carboxyphosphate synthetic domain. Residues Arg129, Arg169, Gly175, Gly176, Arg208, Ile210, Glu215, Gly241, Ile242, His243, Gln284, and Glu298 each contribute to the ATP site. One can recognise an ATP-grasp 1 domain in the interval Lys133–Val327. Positions 284, 298, and 300 each coordinate Mg(2+). Mn(2+)-binding residues include Gln284, Glu298, and Asn300. Positions Ile402 to Ser546 are oligomerization domain. Residues Leu547–Tyr929 form a carbamoyl phosphate synthetic domain region. Positions Glu671–Leu861 constitute an ATP-grasp 2 domain. ATP contacts are provided by Arg707, Ala746, Leu748, Glu752, Gly777, Val778, His779, Ser780, Gln820, and Glu832. Residues Gln820, Glu832, and Asn834 each coordinate Mg(2+). Residues Gln820, Glu832, and Asn834 each coordinate Mn(2+). Positions Leu930–Asp1060 constitute an MGS-like domain. Positions Leu930 to Asp1060 are allosteric domain.

It belongs to the CarB family. Composed of two chains; the small (or glutamine) chain promotes the hydrolysis of glutamine to ammonia, which is used by the large (or ammonia) chain to synthesize carbamoyl phosphate. Tetramer of heterodimers (alpha,beta)4. Mg(2+) is required as a cofactor. The cofactor is Mn(2+).

It carries out the reaction hydrogencarbonate + L-glutamine + 2 ATP + H2O = carbamoyl phosphate + L-glutamate + 2 ADP + phosphate + 2 H(+). It catalyses the reaction hydrogencarbonate + NH4(+) + 2 ATP = carbamoyl phosphate + 2 ADP + phosphate + 2 H(+). It participates in amino-acid biosynthesis; L-arginine biosynthesis; carbamoyl phosphate from bicarbonate: step 1/1. Its pathway is pyrimidine metabolism; UMP biosynthesis via de novo pathway; (S)-dihydroorotate from bicarbonate: step 1/3. In terms of biological role, large subunit of the glutamine-dependent carbamoyl phosphate synthetase (CPSase). CPSase catalyzes the formation of carbamoyl phosphate from the ammonia moiety of glutamine, carbonate, and phosphate donated by ATP, constituting the first step of 2 biosynthetic pathways, one leading to arginine and/or urea and the other to pyrimidine nucleotides. The large subunit (synthetase) binds the substrates ammonia (free or transferred from glutamine from the small subunit), hydrogencarbonate and ATP and carries out an ATP-coupled ligase reaction, activating hydrogencarbonate by forming carboxy phosphate which reacts with ammonia to form carbamoyl phosphate. In Streptococcus agalactiae serotype III (strain NEM316), this protein is Carbamoyl phosphate synthase large chain.